The sequence spans 339 residues: Phosphate acyltransferase (339 aa).

The protein belongs to the PlsX family. As to quaternary structure, homodimer. Probably interacts with PlsY.

It is found in the cytoplasm. It catalyses the reaction a fatty acyl-[ACP] + phosphate = an acyl phosphate + holo-[ACP]. The protein operates within lipid metabolism; phospholipid metabolism. Catalyzes the reversible formation of acyl-phosphate (acyl-PO(4)) from acyl-[acyl-carrier-protein] (acyl-ACP). This enzyme utilizes acyl-ACP as fatty acyl donor, but not acyl-CoA. The polypeptide is Phosphate acyltransferase (Pasteurella multocida (strain Pm70)).